The sequence spans 215 residues: HTH-type transcriptional regulator AcrR (215 aa).

An HTH tetR-type domain is found at 10-70 (QETRQHILDV…EIWELSESNI (61 aa)). A DNA-binding region (H-T-H motif) is located at residues 33–52 (SLGEIAKAAGVTRGAIYWHF).

Functionally, potential regulator protein for the acrAB genes. The sequence is that of HTH-type transcriptional regulator AcrR (acrR) from Shigella flexneri.